We begin with the raw amino-acid sequence, 248 residues long: Trihelix transcription factor ENAP2 (248 aa).

The span at 1 to 13 (METTTPQSKSSVS) shows a compositional bias: polar residues. The segment at 1 to 20 (METTTPQSKSSVSHRPPLGR) is disordered. A DNA-binding region (MADF) is located at residues 24 to 113 (WSEEATATLV…RLDVLIGPVV (90 aa)). The Nuclear localization signal motif lies at 69–76 (RKKTDLQC). The segment at 123 to 150 (SAPFKNHLNPTGSNSTGSSLEDDDEDDD) is disordered. Positions 130-141 (LNPTGSNSTGSS) are enriched in polar residues. A coiled-coil region spans residues 190 to 210 (YERIEGKKQQMMIELEKQRME).

Interacts with the Agrobacterium tumefaciens virulence protein F (VirF) in the nucleus. Binds to EIN2 C-terminal region in the presence of ethylene.

It is found in the nucleus. Its subcellular location is the nucleoplasm. Its function is as follows. Probable transcription regulator. Promotes histone acetylation during ethylene signaling in an EIN2-dependent manner, thus regulating positively ethylene-responsive genes. This Arabidopsis thaliana (Mouse-ear cress) protein is Trihelix transcription factor ENAP2.